The chain runs to 368 residues: CCA-adding enzyme (368 aa).

ATP is bound by residues Gly8 and Arg11. The CTP site is built by Gly8 and Arg11. Mg(2+) contacts are provided by Asp21 and Asp23. ATP-binding residues include Arg91, Arg137, and Arg140. Residues Arg91, Arg137, and Arg140 each coordinate CTP.

This sequence belongs to the tRNA nucleotidyltransferase/poly(A) polymerase family. Bacterial CCA-adding enzyme type 2 subfamily. Mg(2+) is required as a cofactor.

It carries out the reaction a tRNA precursor + 2 CTP + ATP = a tRNA with a 3' CCA end + 3 diphosphate. The enzyme catalyses a tRNA with a 3' CCA end + 2 CTP + ATP = a tRNA with a 3' CCACCA end + 3 diphosphate. Its function is as follows. Catalyzes the addition and repair of the essential 3'-terminal CCA sequence in tRNAs without using a nucleic acid template. Adds these three nucleotides in the order of C, C, and A to the tRNA nucleotide-73, using CTP and ATP as substrates and producing inorganic pyrophosphate. tRNA 3'-terminal CCA addition is required both for tRNA processing and repair. Also involved in tRNA surveillance by mediating tandem CCA addition to generate a CCACCA at the 3' terminus of unstable tRNAs. While stable tRNAs receive only 3'-terminal CCA, unstable tRNAs are marked with CCACCA and rapidly degraded. This chain is CCA-adding enzyme, found in Pseudomonas putida (strain ATCC 700007 / DSM 6899 / JCM 31910 / BCRC 17059 / LMG 24140 / F1).